The chain runs to 473 residues: H(+)/Cl(-) exchange transporter ClcA (473 aa).

The Cytoplasmic segment spans residues 1–32 (MKTDNSTFLAQQIVRLRRRDQIRRLMQRDKTP). Residues 33–69 (LAILFMAAVVGTLTGLVGVAFEKAVSWVQNMRIGALV) form a helical membrane-spanning segment. Residues 70-76 (QVADHAF) lie on the Periplasmic side of the membrane. A helical membrane pass occupies residues 77 to 100 (LLWPLAFILSALLAMVGYFLVRKF). The short motif at 106–110 (GSGIP) is the Selectivity filter part_1 element. Serine 107 serves as a coordination point for chloride. An intramembrane region (helical) is located at residues 109–116 (IPEIEGAL). The Cytoplasmic portion of the chain corresponds to 117–123 (EELRPVR). The next 2 helical transmembrane spans lie at 124-141 (WWRV…TLGA) and 148-166 (EGPT…LDVF). Positions 146–150 (GREGP) match the Selectivity filter part_2 motif. Topologically, residues 167–176 (RMRSAEARHT) are cytoplasmic. Intramembrane regions (helical) lie at residues 177–189 (LLAT…LSAA) and 193–201 (PLAGILFII). Over 202 to 214 (EEMRPQFRYNLIS) the chain is Cytoplasmic. The chain crosses the membrane as a helical span at residues 215-232 (IKAVFTGVIMSSIVFRIF). At 233–252 (NGEAPIIEVGKLSDAPVNTL) the chain is on the periplasmic side. Residues 253–281 (WLYLILGIIFGCVGPVFNSLVLRTQDMFQ) form a helical membrane-spanning segment. At 282-287 (RFHGGE) the chain is on the cytoplasmic side. The chain crosses the membrane as a helical span at residues 288-309 (IKKWVLMGGAIGGLCGILGLIE). Topologically, residues 310-329 (PEAAGGGFNLIPIAAAGNFS) are periplasmic. The next 2 helical transmembrane spans lie at 330–349 (VGLL…LCFS) and 355–376 (GIFA…MAAA). Positions 355 to 359 (GIFAP) match the Selectivity filter part_3 motif. 2 residues coordinate chloride: isoleucine 356 and phenylalanine 357. The Periplasmic portion of the chain corresponds to 377–386 (VLFPQYHLEA). The segment at residues 387–401 (GTFAIAGMGALMAAS) is an intramembrane region (helical). The segment at residues 402-404 (VRA) is an intramembrane region (note=Loop between two helices). Residues 405–416 (PLTGIVLVLEMT) constitute an intramembrane region (helical). An intramembrane region (note=Loop between two helices) is located at residues 417 to 421 (DNYQL). A helical transmembrane segment spans residues 422–438 (ILPMIITCLGATLLAQF). Residues 439-473 (LGGKPLYSTILARTLAKQDAEQAAKNQNAPAGENT) lie on the Cytoplasmic side of the membrane. Tyrosine 445 provides a ligand contact to chloride.

It belongs to the chloride channel (TC 2.A.49) family. ClcA subfamily. As to quaternary structure, homodimer.

Its subcellular location is the cell inner membrane. It catalyses the reaction 2 chloride(in) + H(+)(out) = 2 chloride(out) + H(+)(in). Its function is as follows. Proton-coupled chloride transporter. Functions as antiport system and exchanges two chloride ions for 1 proton. Probably acts as an electrical shunt for an outwardly-directed proton pump that is linked to amino acid decarboxylation, as part of the extreme acid resistance (XAR) response. The protein is H(+)/Cl(-) exchange transporter ClcA of Salmonella schwarzengrund (strain CVM19633).